The chain runs to 428 residues: Glycine reductase complex component B subunits alpha and beta (428 aa).

The active-site Schiff-base intermediate with substrate; via pyruvic acid is the C242. The residue at position 242 (C242) is a Pyruvic acid (Cys).

In terms of assembly, heterohexamer of two alpha, two beta and two gamma subunits. Component of the glycine reductase complex, together with components A and C. PB is substrate specific. In terms of processing, the peptide chain is cleaved into beta and alpha chains, and the alpha chain N-terminal cysteine is deaminated and oxidized to form a reactive pyruvoyl group.

The enzyme catalyses acetyl phosphate + [thioredoxin]-disulfide + NH4(+) + H2O = [thioredoxin]-dithiol + glycine + phosphate + H(+). Functionally, in the first step of glycine reductase, the substrate is bound to component PB via a Schiff base intermediate. Then the PB-activated substrate is nucleophilically attacked by the selenol anion of component PA to transform it to a carboxymethylated selenoether and the respective amine. By action of component PC, acetyl phosphate is formed, leaving component PA in its oxidized state. Finally component PA becomes reduced by the thioredoxin system to start a new catalytic cycle of reductive deamination. The polypeptide is Glycine reductase complex component B subunits alpha and beta (grdE) (Peptoclostridium acidaminophilum (Eubacterium acidaminophilum)).